A 153-amino-acid polypeptide reads, in one-letter code: MVKAVAVLRGDSKITGTVTFEQANESAPTTVSWNITGHDPNAERGMHIHQFGDNTNGCTSAGPHYNPFKKTHGAPTDEVRHVGDLGNIKTDAEGNAVGSVQDKLIKVIGAESILGRTIVVHAGTDDLGRGGNEESKKTGNAGPRPACGVIGIA.

Asn24 carries N-linked (GlcNAc...) asparagine glycosylation. Cu cation contacts are provided by His47, His49, and His64. Residues Cys58 and Cys147 are joined by a disulfide bond. Zn(2+) contacts are provided by His64, His72, His81, and Asp84. His121 contributes to the Cu cation binding site. Over residues Asp126–Lys137 the composition is skewed to basic and acidic residues. The interval Asp126 to Pro145 is disordered. Arg144 is a binding site for substrate.

Belongs to the Cu-Zn superoxide dismutase family. In terms of assembly, homodimer. The cofactor is Cu cation. Zn(2+) serves as cofactor.

It is found in the cytoplasm. It catalyses the reaction 2 superoxide + 2 H(+) = H2O2 + O2. Functionally, destroys radicals which are normally produced within the cells and which are toxic to biological systems. The polypeptide is Superoxide dismutase [Cu-Zn] (Humicola lutea).